The primary structure comprises 423 residues: Glucose-1-phosphate adenylyltransferase 1 (423 aa).

Alpha-D-glucose 1-phosphate is bound by residues Tyr-111, Gly-176, 191–192 (EK), and Ser-209.

Belongs to the bacterial/plant glucose-1-phosphate adenylyltransferase family. In terms of assembly, homotetramer.

The catalysed reaction is alpha-D-glucose 1-phosphate + ATP + H(+) = ADP-alpha-D-glucose + diphosphate. Its pathway is glycan biosynthesis; glycogen biosynthesis. Involved in the biosynthesis of ADP-glucose, a building block required for the elongation reactions to produce glycogen. Catalyzes the reaction between ATP and alpha-D-glucose 1-phosphate (G1P) to produce pyrophosphate and ADP-Glc. The sequence is that of Glucose-1-phosphate adenylyltransferase 1 from Alkalilimnicola ehrlichii (strain ATCC BAA-1101 / DSM 17681 / MLHE-1).